Here is a 298-residue protein sequence, read N- to C-terminus: Zinc import ATP-binding protein ZnuC (298 aa).

The ABC transporter domain maps to 17 to 232; the sequence is IELRNAGVYR…PEYVRLFGSR (216 aa). An ATP-binding site is contributed by 49–56; sequence GPNGAGKS. Positions 273 to 298 are disordered; sequence RGHCHVEDGHHHDHEHHHHEGGQPRA. Basic and acidic residues predominate over residues 276 to 298; that stretch reads CHVEDGHHHDHEHHHHEGGQPRA.

Belongs to the ABC transporter superfamily. Zinc importer (TC 3.A.1.15.5) family. In terms of assembly, the complex is composed of two ATP-binding proteins (ZnuC), two transmembrane proteins (ZnuB) and a solute-binding protein (ZnuA).

The protein localises to the cell inner membrane. It carries out the reaction Zn(2+)(out) + ATP(in) + H2O(in) = Zn(2+)(in) + ADP(in) + phosphate(in) + H(+)(in). In terms of biological role, part of the ABC transporter complex ZnuABC involved in zinc import. Responsible for energy coupling to the transport system. This is Zinc import ATP-binding protein ZnuC from Brucella suis biovar 1 (strain 1330).